A 156-amino-acid chain; its full sequence is Ribosomal RNA large subunit methyltransferase H (156 aa).

S-adenosyl-L-methionine contacts are provided by residues Leu-73, Gly-104, and 123–128 (LSALTL).

Belongs to the RNA methyltransferase RlmH family. As to quaternary structure, homodimer.

It is found in the cytoplasm. It carries out the reaction pseudouridine(1915) in 23S rRNA + S-adenosyl-L-methionine = N(3)-methylpseudouridine(1915) in 23S rRNA + S-adenosyl-L-homocysteine + H(+). In terms of biological role, specifically methylates the pseudouridine at position 1915 (m3Psi1915) in 23S rRNA. The sequence is that of Ribosomal RNA large subunit methyltransferase H from Vibrio parahaemolyticus serotype O3:K6 (strain RIMD 2210633).